The following is a 303-amino-acid chain: uncharacterized protein (303 aa).

S63 bears the Phosphoserine mark.

Belongs to the HAD-like hydrolase superfamily.

The protein localises to the cytoplasm. Its subcellular location is the nucleus. This is an uncharacterized protein from Schizosaccharomyces pombe (strain 972 / ATCC 24843) (Fission yeast).